Here is a 561-residue protein sequence, read N- to C-terminus: Arf-GAP domain and FG repeat-containing protein 1 (561 aa).

The Arf-GAP domain maps to 11–135; sequence EKHLKMLRDM…WYVPPEQAKV (125 aa). A C4-type zinc finger spans residues 29–52; sequence CFDCDQRGPTYVNMTVGSFVCTSC. A Phosphoserine modification is found at Ser167. The tract at residues 171 to 193 is disordered; that stretch reads LHLNKGTPTQSPVVGRSQGQQQE. Residues 176–191 show a composition bias toward polar residues; it reads GTPTQSPVVGRSQGQQ. Position 177 is a phosphothreonine (Thr177). A phosphoserine mark is found at Ser181 and Ser362. O-linked (GlcNAc) serine glycosylation is present at Ser367. Positions 409–451 are disordered; the sequence is PVGASPQTQPASSGPAPFGATPSTNPFVAATGPSAASSTNPFQ. The segment covering 442–451 has biased composition (polar residues); the sequence is SAASSTNPFQ.

As to quaternary structure, interacts with EPS15R and EPS15. Interacts with FCHO1. In terms of processing, O-glycosylated.

The protein resides in the nucleus. Its subcellular location is the cytoplasmic vesicle. Required for vesicle docking or fusion during acrosome biogenesis. May play a role in RNA trafficking or localization. This chain is Arf-GAP domain and FG repeat-containing protein 1 (Agfg1), found in Rattus norvegicus (Rat).